Reading from the N-terminus, the 211-residue chain is BAG family molecular chaperone regulator 2 (211 aa).

Ala-2 is modified (N-acetylalanine). Residues Ser-20, Ser-31, and Ser-73 each carry the phosphoserine modification. The stretch at 20-61 (SMADRSSRLLESLDQLELRVEALREAATAVEQEKEILLEMIH) forms a coiled coil. The 81-residue stretch at 109-189 (SLKHATRIID…NIENSDKAIK (81 aa)) folds into the BAG domain.

As to quaternary structure, binds to the ATPase domain of HSP/HSC70 chaperones. May interact with NWD1. Interacts with HSPA1A (via NBD), HSPA1B (via NBD) and HSPA8. May interact with DNJC9; the interaction seems to be histone-dependent.

Co-chaperone for HSP70 and HSC70 chaperone proteins. Acts as a nucleotide-exchange factor (NEF) promoting the release of ADP from the HSP70 and HSC70 proteins thereby triggering client/substrate protein release. The chain is BAG family molecular chaperone regulator 2 (BAG2) from Homo sapiens (Human).